The following is a 261-amino-acid chain: Cytochrome c oxidase subunit 3 (261 aa).

Over 1–15 (MTHQTHAYHMVNPSP) the chain is Mitochondrial matrix. Residues 16–34 (WPLTGALSALLMTSGLIMW) form a helical membrane-spanning segment. The Mitochondrial intermembrane portion of the chain corresponds to 35–40 (FHFNSM). Residues 41–66 (YLLMLGLTTNTLTMYQWWRDIVREST) form a helical membrane-spanning segment. The Mitochondrial matrix portion of the chain corresponds to 67 to 72 (FQGHHT). A helical transmembrane segment spans residues 73–105 (PIVQKGLRYGMILFIVSEVFFFAGFFWAFYHSS). Residues 106–128 (LAPTPELGGCWPPTGITPLNPME) lie on the Mitochondrial intermembrane side of the membrane. A helical membrane pass occupies residues 129 to 152 (VPLLNTSVLLASGVSITWAHHSLM). At 153-155 (EGN) the chain is on the mitochondrial matrix side. The helical transmembrane segment at 156–183 (RKHMLQALFITISLGVYFTLLQASEYYE) threads the bilayer. Over 184-190 (TPFTISD) the chain is Mitochondrial intermembrane. A helical membrane pass occupies residues 191–223 (GIYGSTFFMATGFHGLHVIIGSTFLIVCFMRQL). Over 224–232 (KFHFTSNHH) the chain is Mitochondrial matrix. A helical membrane pass occupies residues 233 to 256 (FGFEAAAWYWHFVDVVWLFLYVSI). Topologically, residues 257–261 (YWWGS) are mitochondrial intermembrane.

It belongs to the cytochrome c oxidase subunit 3 family. As to quaternary structure, component of the cytochrome c oxidase (complex IV, CIV), a multisubunit enzyme composed of 14 subunits. The complex is composed of a catalytic core of 3 subunits MT-CO1, MT-CO2 and MT-CO3, encoded in the mitochondrial DNA, and 11 supernumerary subunits COX4I, COX5A, COX5B, COX6A, COX6B, COX6C, COX7A, COX7B, COX7C, COX8 and NDUFA4, which are encoded in the nuclear genome. The complex exists as a monomer or a dimer and forms supercomplexes (SCs) in the inner mitochondrial membrane with NADH-ubiquinone oxidoreductase (complex I, CI) and ubiquinol-cytochrome c oxidoreductase (cytochrome b-c1 complex, complex III, CIII), resulting in different assemblies (supercomplex SCI(1)III(2)IV(1) and megacomplex MCI(2)III(2)IV(2)).

Its subcellular location is the mitochondrion inner membrane. The catalysed reaction is 4 Fe(II)-[cytochrome c] + O2 + 8 H(+)(in) = 4 Fe(III)-[cytochrome c] + 2 H2O + 4 H(+)(out). Its function is as follows. Component of the cytochrome c oxidase, the last enzyme in the mitochondrial electron transport chain which drives oxidative phosphorylation. The respiratory chain contains 3 multisubunit complexes succinate dehydrogenase (complex II, CII), ubiquinol-cytochrome c oxidoreductase (cytochrome b-c1 complex, complex III, CIII) and cytochrome c oxidase (complex IV, CIV), that cooperate to transfer electrons derived from NADH and succinate to molecular oxygen, creating an electrochemical gradient over the inner membrane that drives transmembrane transport and the ATP synthase. Cytochrome c oxidase is the component of the respiratory chain that catalyzes the reduction of oxygen to water. Electrons originating from reduced cytochrome c in the intermembrane space (IMS) are transferred via the dinuclear copper A center (CU(A)) of subunit 2 and heme A of subunit 1 to the active site in subunit 1, a binuclear center (BNC) formed by heme A3 and copper B (CU(B)). The BNC reduces molecular oxygen to 2 water molecules using 4 electrons from cytochrome c in the IMS and 4 protons from the mitochondrial matrix. In Halichoerus grypus (Gray seal), this protein is Cytochrome c oxidase subunit 3 (MT-CO3).